A 129-amino-acid polypeptide reads, in one-letter code: MSLSPASGIGRFYAKSAKIIRFVRLGCTNRPFYHIVVMERRKNQHQPVIEQVGSFDPLPNDYNERLVALNTERIRYWLGKGAHLSTPAAELLGIAGLLPIHPRTYMTAWRNRRTAAEAEASPEKAESTA.

The protein belongs to the bacterial ribosomal protein bS16 family. Component of the mitochondrial ribosome small subunit (28S) which comprises a 12S rRNA and about 30 distinct proteins.

It is found in the mitochondrion. The polypeptide is Small ribosomal subunit protein bS16m (mRpS16) (Drosophila melanogaster (Fruit fly)).